The following is a 157-amino-acid chain: Protein Smg homolog (157 aa).

The protein belongs to the Smg family.

This Xanthomonas oryzae pv. oryzae (strain MAFF 311018) protein is Protein Smg homolog.